Reading from the N-terminus, the 355-residue chain is MIMAGGTGGHVFPGLAVARAMQAEGWRVIWLGTRNGMEATLVPQHGFTIELINFSGLRGKKPVSYLLLPWRLAKACWQSFCILRRQRPQIVLGMGGYPALPGGIMAVLSGKPLLIHEQNRIAGLTNKILAKIASRILLAFPGTITDQAGKIQVTGNPVRTEIAQLPSPEVRYAKRAGKLNILVVGGSLGAQALNTVLPQALSMIPGNQRPFVTHQSGKVHLAALQQAYAEHGVTGNLVAFIEDMAVYYQNCDLVVCRAGALTIAELAAAGVASILVPYPYAVDDHQTANARFLSEHHAAVLWPQSELTANSLAQWLMTCTRTQLQTMAINARMLAMPEAAQSVVTVCQQLIETGP.

UDP-N-acetyl-alpha-D-glucosamine-binding positions include 7 to 9, asparagine 119, arginine 159, serine 187, isoleucine 241, and glutamine 286; that span reads TGG.

The protein belongs to the glycosyltransferase 28 family. MurG subfamily.

It is found in the cell inner membrane. The catalysed reaction is di-trans,octa-cis-undecaprenyl diphospho-N-acetyl-alpha-D-muramoyl-L-alanyl-D-glutamyl-meso-2,6-diaminopimeloyl-D-alanyl-D-alanine + UDP-N-acetyl-alpha-D-glucosamine = di-trans,octa-cis-undecaprenyl diphospho-[N-acetyl-alpha-D-glucosaminyl-(1-&gt;4)]-N-acetyl-alpha-D-muramoyl-L-alanyl-D-glutamyl-meso-2,6-diaminopimeloyl-D-alanyl-D-alanine + UDP + H(+). The protein operates within cell wall biogenesis; peptidoglycan biosynthesis. Its function is as follows. Cell wall formation. Catalyzes the transfer of a GlcNAc subunit on undecaprenyl-pyrophosphoryl-MurNAc-pentapeptide (lipid intermediate I) to form undecaprenyl-pyrophosphoryl-MurNAc-(pentapeptide)GlcNAc (lipid intermediate II). The sequence is that of UDP-N-acetylglucosamine--N-acetylmuramyl-(pentapeptide) pyrophosphoryl-undecaprenol N-acetylglucosamine transferase from Nitrosomonas eutropha (strain DSM 101675 / C91 / Nm57).